Consider the following 366-residue polypeptide: UDP-N-acetylglucosamine 2-epimerase (366 aa).

His206 is a catalytic residue.

It belongs to the UDP-N-acetylglucosamine 2-epimerase family. As to quaternary structure, homodimer.

It is found in the cytoplasm. The catalysed reaction is UDP-N-acetyl-alpha-D-glucosamine = UDP-N-acetyl-alpha-D-mannosamine. In terms of biological role, catalyzes the reversible epimerization at C-2 of UDP-N-acetylglucosamine (UDP-GlcNAc) to produce UDP-N-acetylmannosamine (UDP-ManNAc), the activated donor of ManNAc residues. The sequence is that of UDP-N-acetylglucosamine 2-epimerase (wecB) from Methanococcus maripaludis (strain DSM 14266 / JCM 13030 / NBRC 101832 / S2 / LL).